The sequence spans 398 residues: uncharacterized protein (398 aa).

Lys-212 carries the post-translational modification N6-(pyridoxal phosphate)lysine.

Belongs to the trans-sulfuration enzymes family. The cofactor is pyridoxal 5'-phosphate.

This is an uncharacterized protein from Schizosaccharomyces pombe (strain 972 / ATCC 24843) (Fission yeast).